Reading from the N-terminus, the 502-residue chain is Cyclin-dependent kinase 19 (502 aa).

Methionine 1 is modified (N-acetylmethionine). The Protein kinase domain maps to 21–335 (EYEGCKVGRG…SEQALQDPYF (315 aa)). ATP-binding positions include 27-35 (VGRGTYGHV) and lysine 52. Aspartate 151 serves as the catalytic Proton acceptor. The tract at residues 359–502 (LNEDDPEEKG…YHPSHQAHRY (144 aa)) is disordered. A compositionally biased stretch (low complexity) spans 371–392 (NQQQQQNQHQQPTAPPQQAAAP). Over residues 408–421 (TAGGAGAGVGGTGA) the composition is skewed to gly residues. Residues 424 to 435 (QHSQDSSLNQVP) are compositionally biased toward polar residues. Serine 449 is subject to Phosphoserine. The segment covering 458 to 467 (YQHSSSRLNY) has biased composition (polar residues). The span at 468–496 (QSSVQGSSQSQSTLGYSSSSQQSSQYHPS) shows a compositional bias: low complexity.

It belongs to the protein kinase superfamily. CMGC Ser/Thr protein kinase family. CDC2/CDKX subfamily.

The protein localises to the cytoplasm. The protein resides in the perinuclear region. It is found in the nucleus. The catalysed reaction is L-seryl-[protein] + ATP = O-phospho-L-seryl-[protein] + ADP + H(+). The enzyme catalyses L-threonyl-[protein] + ATP = O-phospho-L-threonyl-[protein] + ADP + H(+). The chain is Cyclin-dependent kinase 19 (CDK19) from Homo sapiens (Human).